We begin with the raw amino-acid sequence, 457 residues long: Cysteine--tRNA ligase (457 aa).

A Zn(2+)-binding site is contributed by cysteine 27. The short motif at 29–39 is the 'HIGH' region element; it reads ITPQSEPHIGH. Zn(2+) is bound by residues cysteine 207, histidine 232, and glutamate 236. The short motif at 265–269 is the 'KMSKS' region element; the sequence is KMSKS. An ATP-binding site is contributed by lysine 268.

It belongs to the class-I aminoacyl-tRNA synthetase family. As to quaternary structure, monomer. Requires Zn(2+) as cofactor.

It is found in the cytoplasm. The catalysed reaction is tRNA(Cys) + L-cysteine + ATP = L-cysteinyl-tRNA(Cys) + AMP + diphosphate. The protein is Cysteine--tRNA ligase of Dehalococcoides mccartyi (strain ATCC BAA-2100 / JCM 16839 / KCTC 5957 / BAV1).